Reading from the N-terminus, the 574-residue chain is Septation ring formation regulator EzrA (574 aa).

Residues 1–7 (MSSGIIL) are Extracellular-facing. A helical membrane pass occupies residues 8–26 (LLVAIVLLVIIAYVVGVVI). Topologically, residues 27 to 574 (RKRNDTLIAN…YEKTQERIRF (548 aa)) are cytoplasmic. Coiled-coil stretches lie at residues 104–141 (VRAKHEIDNVDSQLTIIEEDIVSIREALEVLKEQEEKN), 275–343 (LVSL…SAKY), and 473–525 (DIEA…VQKS).

It belongs to the EzrA family.

The protein localises to the cell membrane. In terms of biological role, negative regulator of FtsZ ring formation; modulates the frequency and position of FtsZ ring formation. Inhibits FtsZ ring formation at polar sites. Interacts either with FtsZ or with one of its binding partners to promote depolymerization. The protein is Septation ring formation regulator EzrA of Streptococcus agalactiae serotype III (strain NEM316).